A 74-amino-acid polypeptide reads, in one-letter code: Capsid protein VP2 (74 aa).

Its subcellular location is the virion. Its function is as follows. This extremely basic protein may tightly bind to SSV1 DNA. Essential for virus function. The sequence is that of Capsid protein VP2 (VP2) from Saccharolobus solfataricus (Sulfolobus solfataricus).